Here is a 91-residue protein sequence, read N- to C-terminus: PqqA binding protein 1 (91 aa).

It belongs to the PqqD family. As to quaternary structure, monomer. Interacts with PqqE.

Its pathway is cofactor biosynthesis; pyrroloquinoline quinone biosynthesis. In terms of biological role, functions as a PqqA binding protein and presents PqqA to PqqE, in the pyrroloquinoline quinone (PQQ) biosynthetic pathway. This chain is PqqA binding protein 1 (pqqD1), found in Pseudomonas putida (strain ATCC 47054 / DSM 6125 / CFBP 8728 / NCIMB 11950 / KT2440).